The primary structure comprises 162 residues: MSSFTHFNEQGRAKMVDITNKEDTVRVAVAKTSVTVSEEIYEKMTNNAIEKGDVLAVAQVAGVMAAKKTADLIPMCHPLMLKGVDIAFSWENEADAYKLVITATVKTKGSTGVEMEALTAASVCALTVYDMCKALDKGMIIGPTYLVEKTGGKSGHYRRKTD.

Residues Met75 to His77 and Met115 to Glu116 each bind substrate. Asp130 is a catalytic residue.

The protein belongs to the MoaC family. Homohexamer; trimer of dimers.

The enzyme catalyses (8S)-3',8-cyclo-7,8-dihydroguanosine 5'-triphosphate = cyclic pyranopterin phosphate + diphosphate. It participates in cofactor biosynthesis; molybdopterin biosynthesis. In terms of biological role, catalyzes the conversion of (8S)-3',8-cyclo-7,8-dihydroguanosine 5'-triphosphate to cyclic pyranopterin monophosphate (cPMP). The polypeptide is Cyclic pyranopterin monophosphate synthase (Geobacillus thermodenitrificans (strain NG80-2)).